Consider the following 64-residue polypeptide: Alpha-conotoxin CnIC (64 aa).

Positions 1 to 21 (MGMRMMFTVFLLVVLTTTVVS) are cleaved as a signal peptide. A propeptide spanning residues 22-47 (FPSDSASDVRDDEAKDERSDMYKSKR) is cleaved from the precursor. Asn48 is modified (deamidated asparagine; in CnIH; partial). Disulfide bonds link Cys51-Cys56 and Cys52-Cys62. Cys62 carries the cysteine amide modification.

This sequence belongs to the conotoxin A superfamily. In terms of tissue distribution, expressed by the venom duct.

Its subcellular location is the secreted. Functionally, alpha-conotoxins act on postsynaptic membranes, they bind to the nicotinic acetylcholine receptors (nAChR) and thus inhibit them. This is Alpha-conotoxin CnIC from Conus consors (Singed cone).